A 340-amino-acid chain; its full sequence is Protein-lysine N-methyltransferase EEF2KMT (340 aa).

Met1 carries the N-acetylmethionine modification. Residues Trp139, 165–167 (GSG), Trp238, and Ala257 contribute to the S-adenosyl-L-methionine site.

The protein belongs to the class I-like SAM-binding methyltransferase superfamily. EEF2KMT family. Interacts with FAM86B2 and FAM86C1P.

The protein localises to the cytoplasm. The catalysed reaction is L-lysyl-[protein] + 3 S-adenosyl-L-methionine = N(6),N(6),N(6)-trimethyl-L-lysyl-[protein] + 3 S-adenosyl-L-homocysteine + 3 H(+). Its function is as follows. Catalyzes the trimethylation of eukaryotic elongation factor 2 (EEF2) on 'Lys-525'. The polypeptide is Protein-lysine N-methyltransferase EEF2KMT (EEF2KMT) (Bos taurus (Bovine)).